The following is a 207-amino-acid chain: Uracil phosphoribosyltransferase (207 aa).

5-phospho-alpha-D-ribose 1-diphosphate contacts are provided by residues arginine 77, arginine 102, and aspartate 129–serine 137. Uracil is bound by residues isoleucine 192 and glycine 197–alanine 199. Aspartate 198 serves as a coordination point for 5-phospho-alpha-D-ribose 1-diphosphate.

Belongs to the UPRTase family. Requires Mg(2+) as cofactor.

The catalysed reaction is UMP + diphosphate = 5-phospho-alpha-D-ribose 1-diphosphate + uracil. It functions in the pathway pyrimidine metabolism; UMP biosynthesis via salvage pathway; UMP from uracil: step 1/1. Its activity is regulated as follows. Allosterically activated by GTP. Its function is as follows. Catalyzes the conversion of uracil and 5-phospho-alpha-D-ribose 1-diphosphate (PRPP) to UMP and diphosphate. The protein is Uracil phosphoribosyltransferase of Ureaplasma parvum serovar 3 (strain ATCC 27815 / 27 / NCTC 11736).